Reading from the N-terminus, the 205-residue chain is High frequency lysogenization protein HflD homolog (205 aa).

The protein belongs to the HflD family.

It is found in the cytoplasm. Its subcellular location is the cell inner membrane. This Shewanella halifaxensis (strain HAW-EB4) protein is High frequency lysogenization protein HflD homolog.